A 544-amino-acid polypeptide reads, in one-letter code: Pyruvate kinase (544 aa).

R31 serves as a coordination point for substrate. N33 and D61 together coordinate K(+). N33 to H36 contributes to the ATP binding site. R68 contributes to the ATP binding site. E204 provides a ligand contact to Mg(2+). The substrate site is built by G227, D228, and T260. Mg(2+) is bound at residue D228.

It belongs to the pyruvate kinase family. As to quaternary structure, homotetramer. It depends on Mg(2+) as a cofactor. Requires K(+) as cofactor.

The enzyme catalyses pyruvate + ATP = phosphoenolpyruvate + ADP + H(+). It functions in the pathway carbohydrate degradation; glycolysis; pyruvate from D-glyceraldehyde 3-phosphate: step 5/5. This chain is Pyruvate kinase, found in Thermoplasma acidophilum (strain ATCC 25905 / DSM 1728 / JCM 9062 / NBRC 15155 / AMRC-C165).